The following is a 262-amino-acid chain: Phosphatidylserine decarboxylase proenzyme (262 aa).

Active-site charge relay system; for autoendoproteolytic cleavage activity residues include D86, H142, and S226. S226 serves as the catalytic Schiff-base intermediate with substrate; via pyruvic acid; for decarboxylase activity. S226 carries the pyruvic acid (Ser); by autocatalysis modification.

This sequence belongs to the phosphatidylserine decarboxylase family. PSD-B subfamily. Prokaryotic type I sub-subfamily. Heterodimer of a large membrane-associated beta subunit and a small pyruvoyl-containing alpha subunit. The cofactor is pyruvate. Post-translationally, is synthesized initially as an inactive proenzyme. Formation of the active enzyme involves a self-maturation process in which the active site pyruvoyl group is generated from an internal serine residue via an autocatalytic post-translational modification. Two non-identical subunits are generated from the proenzyme in this reaction, and the pyruvate is formed at the N-terminus of the alpha chain, which is derived from the carboxyl end of the proenzyme. The autoendoproteolytic cleavage occurs by a canonical serine protease mechanism, in which the side chain hydroxyl group of the serine supplies its oxygen atom to form the C-terminus of the beta chain, while the remainder of the serine residue undergoes an oxidative deamination to produce ammonia and the pyruvoyl prosthetic group on the alpha chain. During this reaction, the Ser that is part of the protease active site of the proenzyme becomes the pyruvoyl prosthetic group, which constitutes an essential element of the active site of the mature decarboxylase.

The protein localises to the cell membrane. The catalysed reaction is a 1,2-diacyl-sn-glycero-3-phospho-L-serine + H(+) = a 1,2-diacyl-sn-glycero-3-phosphoethanolamine + CO2. It functions in the pathway phospholipid metabolism; phosphatidylethanolamine biosynthesis; phosphatidylethanolamine from CDP-diacylglycerol: step 2/2. Its function is as follows. Catalyzes the formation of phosphatidylethanolamine (PtdEtn) from phosphatidylserine (PtdSer). The protein is Phosphatidylserine decarboxylase proenzyme of Bacillus cereus (strain AH820).